The chain runs to 394 residues: Protein STRICTOSIDINE SYNTHASE-LIKE 1 (394 aa).

The N-terminal stretch at 1–21 (MESLLLIAYAFLYLFLLSHEA) is a signal peptide. Over residues 61-73 (GLEKRPNHSEDNP) the composition is skewed to basic and acidic residues. Positions 61-92 (GLEKRPNHSEDNPPSRGWTGEPGLDPRGEGPY) are disordered. Residues Asn67, Asn122, and Asn196 are each glycosylated (N-linked (GlcNAc...) asparagine).

Belongs to the strictosidine synthase family.

The protein localises to the vacuole. In Arabidopsis thaliana (Mouse-ear cress), this protein is Protein STRICTOSIDINE SYNTHASE-LIKE 1.